A 125-amino-acid polypeptide reads, in one-letter code: Large ribosomal subunit protein bL19 (125 aa).

This sequence belongs to the bacterial ribosomal protein bL19 family.

In terms of biological role, this protein is located at the 30S-50S ribosomal subunit interface and may play a role in the structure and function of the aminoacyl-tRNA binding site. In Wolbachia sp. subsp. Brugia malayi (strain TRS), this protein is Large ribosomal subunit protein bL19.